We begin with the raw amino-acid sequence, 484 residues long: UDP-glycosyltransferase 73B4 (484 aa).

The active-site Proton acceptor is H18. 2 residues coordinate an anthocyanidin: H18 and N89. The Charge relay role is filled by D129. Residues A356, Q358, H373, W376, N377, S378, and E381 each contribute to the UDP-alpha-D-glucose site. A396 serves as a coordination point for an anthocyanidin. The UDP-alpha-D-glucose site is built by E397 and Q398.

The protein belongs to the UDP-glycosyltransferase family. Specifically expressed in roots.

It carries out the reaction a flavonol + UDP-alpha-D-glucose = a flavonol 3-O-beta-D-glucoside + UDP + H(+). Its function is as follows. Possesses quercetin 3-O-glucosyltransferase and low 7-O-glucosyltransferase activities in vitro. Also active in vitro on benzoates and benzoate derivatives. Can detoxify the explosive 2,4,6-trinitrotoluene in plant by forming O- or C-glucose conjugates. The protein is UDP-glycosyltransferase 73B4 (UGT73B4) of Arabidopsis thaliana (Mouse-ear cress).